Here is a 344-residue protein sequence, read N- to C-terminus: tRNA N6-adenosine threonylcarbamoyltransferase (344 aa).

Residues His-114 and His-118 each coordinate Fe cation. Substrate-binding positions include 136-140, Asp-170, Gly-183, Asp-187, and Asn-278; that span reads LVSGG. Asp-306 contacts Fe cation.

It belongs to the KAE1 / TsaD family. Fe(2+) is required as a cofactor.

Its subcellular location is the cytoplasm. It catalyses the reaction L-threonylcarbamoyladenylate + adenosine(37) in tRNA = N(6)-L-threonylcarbamoyladenosine(37) in tRNA + AMP + H(+). In terms of biological role, required for the formation of a threonylcarbamoyl group on adenosine at position 37 (t(6)A37) in tRNAs that read codons beginning with adenine. Is involved in the transfer of the threonylcarbamoyl moiety of threonylcarbamoyl-AMP (TC-AMP) to the N6 group of A37, together with TsaE and TsaB. TsaD likely plays a direct catalytic role in this reaction. In Mycobacteroides abscessus (strain ATCC 19977 / DSM 44196 / CCUG 20993 / CIP 104536 / JCM 13569 / NCTC 13031 / TMC 1543 / L948) (Mycobacterium abscessus), this protein is tRNA N6-adenosine threonylcarbamoyltransferase.